The sequence spans 1242 residues: Membrane-associated phosphatidylinositol transfer protein 1 (1242 aa).

Phosphothreonine occurs at positions 59, 282, and 287. The disordered stretch occupies residues 259-330 (CNTGSEGPEA…HGGGVSPQSL (72 aa)). The span at 272–282 (GKPSTETQPGT) shows a compositional bias: polar residues. Positions 299–319 (ASPDASFGKQWSSSSRSSYSS) are enriched in low complexity. Phosphoserine is present on residues serine 300, serine 304, serine 319, serine 326, serine 329, serine 342, serine 345, serine 346, and serine 373. Serine 382 is modified (phosphoserine; by CDK1). Low complexity predominate over residues 581–593 (AGTGSRGSSRRGS). Residues 581–678 (AGTGSRGSSR…PASSEAPDGP (98 aa)) are disordered. Phosphoserine is present on residues serine 593, serine 600, and serine 621. The segment covering 643–656 (GSQNSLQVAPTVTS) has biased composition (polar residues). Residues 684–878 (LDFKVSGFFL…VAFILRQVIE (195 aa)) enclose the DDHD domain. Serine 894 is subject to Phosphoserine. A disordered region spans residues 1207-1242 (RSRGPSQVDLEGPGTPPTTLARGKTRSISLKLDSEE). An Omega-N-methylarginine modification is found at arginine 1209. Phosphoserine is present on serine 1235.

This sequence belongs to the PtdIns transfer protein family. PI transfer class IIA subfamily. In terms of assembly, interacts with PIK4CA and VAPB. Interacts with PTK2B via its C-terminus. Interacts with RHOA. Has higher affinity for the inactive, GDP-bound form of RHOA. The CDK1-phosphorylated form interacts with PLK1. In terms of processing, phosphorylated on multiple sites by CDK1 at the onset of mitosis. Phosphorylation facilitates dissociation from the Golgi complex and is required for interaction with PLK1. Post-translationally, phosphorylated on threonine residues upon treatment with oleic acid. Phosphorylated on tyrosine residues by PTK2B.

It localises to the cytoplasm. Its subcellular location is the golgi apparatus. The protein localises to the golgi stack membrane. The protein resides in the endoplasmic reticulum membrane. It is found in the lipid droplet. It localises to the cleavage furrow. Its subcellular location is the midbody. It carries out the reaction a 1,2-diacyl-sn-glycero-3-phospho-(1D-myo-inositol)(in) = a 1,2-diacyl-sn-glycero-3-phospho-(1D-myo-inositol)(out). In terms of biological role, catalyzes the transfer of phosphatidylinositol (PI) between membranes. Binds PI, phosphatidylcholine (PC) and phosphatidic acid (PA) with the binding affinity order of PI &gt; PA &gt; PC. Regulates RHOA activity, and plays a role in cytoskeleton remodeling. Necessary for normal completion of cytokinesis. Plays a role in maintaining normal diacylglycerol levels in the Golgi apparatus. Necessary for maintaining the normal structure of the endoplasmic reticulum and the Golgi apparatus. Required for protein export from the endoplasmic reticulum and the Golgi. Binds calcium ions. The sequence is that of Membrane-associated phosphatidylinositol transfer protein 1 (Pitpnm1) from Rattus norvegicus (Rat).